The chain runs to 66 residues: ATP synthase subunit c (66 aa).

The next 2 membrane-spanning stretches (helical) occupy residues 3–23 (LTFF…GMLM) and 45–65 (IMGI…SFVI).

The protein belongs to the ATPase C chain family. As to quaternary structure, F-type ATPases have 2 components, F(1) - the catalytic core - and F(0) - the membrane proton channel. F(1) has five subunits: alpha(3), beta(3), gamma(1), delta(1), epsilon(1). F(0) has three main subunits: a(1), b(2) and c(10-14). The alpha and beta chains form an alternating ring which encloses part of the gamma chain. F(1) is attached to F(0) by a central stalk formed by the gamma and epsilon chains, while a peripheral stalk is formed by the delta and b chains.

It is found in the cell membrane. Functionally, f(1)F(0) ATP synthase produces ATP from ADP in the presence of a proton or sodium gradient. F-type ATPases consist of two structural domains, F(1) containing the extramembraneous catalytic core and F(0) containing the membrane proton channel, linked together by a central stalk and a peripheral stalk. During catalysis, ATP synthesis in the catalytic domain of F(1) is coupled via a rotary mechanism of the central stalk subunits to proton translocation. Its function is as follows. Key component of the F(0) channel; it plays a direct role in translocation across the membrane. A homomeric c-ring of between 10-14 subunits forms the central stalk rotor element with the F(1) delta and epsilon subunits. This is ATP synthase subunit c (atpE) from Streptococcus oralis.